A 442-amino-acid chain; its full sequence is Chromosomal replication initiator protein DnaA (442 aa).

The interval 1–75 (MDAWPRCLER…GNGEVALAVG (75 aa)) is domain I, interacts with DnaA modulators. Residues 75 to 104 (GSRPRAPEPAPAPVAATIAPQAAPIAPFAG) are domain II. The interval 105 to 322 (NLDSHYTFAN…GALNTLVARA (218 aa)) is domain III, AAA+ region. Positions 150, 152, 153, and 154 each coordinate ATP. The interval 323 to 442 (NFTGRSITVE…WEKLIRKLSE (120 aa)) is domain IV, binds dsDNA.

Belongs to the DnaA family. In terms of assembly, oligomerizes as a right-handed, spiral filament on DNA at oriC.

The protein localises to the cytoplasm. Plays an essential role in the initiation and regulation of chromosomal replication. ATP-DnaA binds to the origin of replication (oriC) to initiate formation of the DNA replication initiation complex once per cell cycle. Binds the DnaA box (a 9 base pair repeat at the origin) and separates the double-stranded (ds)DNA. Forms a right-handed helical filament on oriC DNA; dsDNA binds to the exterior of the filament while single-stranded (ss)DNA is stabiized in the filament's interior. The ATP-DnaA-oriC complex binds and stabilizes one strand of the AT-rich DNA unwinding element (DUE), permitting loading of DNA polymerase. After initiation quickly degrades to an ADP-DnaA complex that is not apt for DNA replication. Binds acidic phospholipids. In Xanthomonas oryzae pv. oryzae (strain PXO99A), this protein is Chromosomal replication initiator protein DnaA.